A 166-amino-acid polypeptide reads, in one-letter code: Small ribosomal subunit protein uS5 (166 aa).

The region spanning 10-73 (QIEKLISLNR…TSARKNLRFV (64 aa)) is the S5 DRBM domain.

The protein belongs to the universal ribosomal protein uS5 family. Part of the 30S ribosomal subunit. Contacts proteins S4 and S8.

With S4 and S12 plays an important role in translational accuracy. In terms of biological role, located at the back of the 30S subunit body where it stabilizes the conformation of the head with respect to the body. The chain is Small ribosomal subunit protein uS5 from Borrelia garinii subsp. bavariensis (strain ATCC BAA-2496 / DSM 23469 / PBi) (Borreliella bavariensis).